A 311-amino-acid chain; its full sequence is CD-NTase-associated protein 6 (311 aa).

Residues 84–89 (GSGKTE) and 215–216 (RR) contribute to the ATP site.

Belongs to the AAA ATPase family. In terms of assembly, homohexamer. Forms a 1:1:6 CdnC:Cap7:Cap6 complex.

Its function is as follows. Regulates complex assembly in a CBASS antivirus system. CBASS (cyclic oligonucleotide-based antiphage signaling system) provides immunity against bacteriophage. The CD-NTase protein synthesizes cyclic nucleotides in response to infection; these serve as specific second messenger signals. The signals activate a diverse range of effectors, leading to bacterial cell death and thus abortive phage infection. A type III-C(AAA) CBASS system. In terms of biological role, binds and disassembles an active CdnC:Cap7 (Cap7 is also called HORMA) complex, inhibiting the complex's ability to synthesize cyclic nucleotide second messengers. An AAA+-ATPase remodeler, in the absence of foreign threat Cap6 (also called Trip13) probably maintains the Cap7 protein in its open, inactive state. Once activated (presumably by a bacteriophage protein) Cap7 binds to and activates its cognate CD-NTase (CdnC in this bacteria) to synthesize cAAA, a cyclic nucleotide second messenger. cAAA activates the NucC endonuclease which degrades all DNA in the infected cell, causing cell death and abortive phage infection. Functionally, protects E.coli strain JP313 against bacteriophage lambda cI- infection. When the cdnC-cap7-cap6-nucC operon is transformed into a susceptible E.coli strain it confers bacteriophage lambda cI- immunity. Mutations in the sensor (Cap7 also called HORMA) or effector proteins (CdnC, NucC) but not the disassembly protein (Cap6 also called Trip13) no longer confer immunity. The presence of the intact operon leads to culture collapse and cell death, which occurs before the phage has finished its replication cycle, thus protecting non-infected bacteria by aborting the phage infection and preventing its propagation. This is CD-NTase-associated protein 6 from Escherichia coli (strain MS 115-1).